Reading from the N-terminus, the 691-residue chain is Elongation factor G (691 aa).

Residues 8-282 (ERVRNIGIAA…AVVDYLPAPV (275 aa)) form the tr-type G domain. GTP is bound by residues 17 to 24 (AHIDAGKT), 81 to 85 (DTPGH), and 135 to 138 (NKMD).

It belongs to the TRAFAC class translation factor GTPase superfamily. Classic translation factor GTPase family. EF-G/EF-2 subfamily.

It is found in the cytoplasm. Functionally, catalyzes the GTP-dependent ribosomal translocation step during translation elongation. During this step, the ribosome changes from the pre-translocational (PRE) to the post-translocational (POST) state as the newly formed A-site-bound peptidyl-tRNA and P-site-bound deacylated tRNA move to the P and E sites, respectively. Catalyzes the coordinated movement of the two tRNA molecules, the mRNA and conformational changes in the ribosome. This is Elongation factor G from Prochlorococcus marinus (strain MIT 9312).